Consider the following 488-residue polypeptide: MALSLTTSIALATILFFVYKFATRSKSTKNSLPEPWRLPIIGHMHHLIGTIPHRGVMDLARKYGSLMHLQLGEVSTIVVSSPKWAKEILTTYDITFANRPETLTGEIVAYHNTDIVLAPYGEYWRQLRKLCTLELLSVKKVKSFQSLREEECWNLVQEIKASGSGRPVNLSENIFKLIATILSRAAFGKGIKDQKEFTEIVKEILRQTGGFDVADIFPSKKFLHHLSGKRARLTSIHQKLDNLINNLVAEHTVKTSSKTNETLLDVLLRLKDSAEFPLTADNVKAIILDMFGAGTDTSSATIEWAISELIKCPRAMEKVQVELRKALNGKERIHEEDIQELSYLNLVIKETLRLHPPLPLVMPRECRQPVNLAGYDIPNKTKLIVNVFAINRDPEYWKDAETFIPERFENSSTTVMGAEYEYLPFGAGRRMCPGAALGLANVQLPLANILYHFNWKLPNGASYDQIDMTESFGATVQRKTELLLVPSF.

Residues 7–23 (TSIALATILFFVYKFAT) traverse the membrane as a helical; Signal-anchor for type II membrane protein segment. N-linked (GlcNAc...) asparagine glycosylation is found at N169, N260, N379, and N410. C432 contacts heme.

This sequence belongs to the cytochrome P450 family. In terms of tissue distribution, expressed in floral glandular trichomes.

The protein localises to the endoplasmic reticulum membrane. The enzyme catalyses (+)-(R)-germacrene A + 3 reduced [NADPH--hemoprotein reductase] + 3 O2 = germacra-1(10),4,11(13)-trien-12-oate + 3 oxidized [NADPH--hemoprotein reductase] + 4 H2O + 4 H(+). The protein operates within secondary metabolite biosynthesis; terpenoid biosynthesis. Its function is as follows. Involved in the biosynthesis of germacrene-derived sesquiterpene lactones. Component of the parthenolide biosynthetic pathway; parthenolide and conjugates are promising anti-cancer drugs highly active against colon cancer cells. Catalyzes three consecutive oxidations of germacrene A to produce germacrene A acid. The sequence is that of Germacrene A hydroxylase from Tanacetum parthenium (Feverfew).